The chain runs to 66 residues: Alpha-like toxin Bom3 (66 aa).

Positions 2–66 constitute an LCN-type CS-alpha/beta domain; sequence RDGYIAQPEN…PIVVGGEKCH (65 aa). Intrachain disulfides connect cysteine 12–cysteine 65, cysteine 16–cysteine 37, cysteine 23–cysteine 47, and cysteine 27–cysteine 49.

The protein belongs to the long (4 C-C) scorpion toxin superfamily. Sodium channel inhibitor family. Alpha subfamily. As to expression, expressed by the venom gland.

Its subcellular location is the secreted. Its function is as follows. Alpha toxins bind voltage-independently at site-3 of sodium channels (Nav) and inhibit the inactivation of the activated channels, thereby blocking neuronal transmission. As it competes neither with the classical alpha-toxin AaH2 nor the beta-toxin Css2, this toxin is an alpha-like toxin. This is Alpha-like toxin Bom3 from Buthus occitanus mardochei (Moroccan scorpion).